The primary structure comprises 122 residues: Large ribosomal subunit protein uL14 (122 aa).

It belongs to the universal ribosomal protein uL14 family. Part of the 50S ribosomal subunit. Forms a cluster with proteins L3 and L19. In the 70S ribosome, L14 and L19 interact and together make contacts with the 16S rRNA in bridges B5 and B8.

In terms of biological role, binds to 23S rRNA. Forms part of two intersubunit bridges in the 70S ribosome. The polypeptide is Large ribosomal subunit protein uL14 (Nitratiruptor sp. (strain SB155-2)).